We begin with the raw amino-acid sequence, 337 residues long: Methylthioribose-1-phosphate isomerase (337 aa).

Residues 47–49 (RGA), Arg-81, and Gln-184 contribute to the substrate site. Catalysis depends on Asp-225, which acts as the Proton donor. 235–236 (NK) contacts substrate.

It belongs to the eIF-2B alpha/beta/delta subunits family. MtnA subfamily.

The enzyme catalyses 5-(methylsulfanyl)-alpha-D-ribose 1-phosphate = 5-(methylsulfanyl)-D-ribulose 1-phosphate. The protein operates within amino-acid biosynthesis; L-methionine biosynthesis via salvage pathway; L-methionine from S-methyl-5-thio-alpha-D-ribose 1-phosphate: step 1/6. In terms of biological role, catalyzes the interconversion of methylthioribose-1-phosphate (MTR-1-P) into methylthioribulose-1-phosphate (MTRu-1-P). This is Methylthioribose-1-phosphate isomerase from Synechococcus sp. (strain CC9605).